Here is a 169-residue protein sequence, read N- to C-terminus: MQNTIRIVGIDPGLRRTGWGIIDTLGNSLRFVASGTVTSDGDMDLASRLCQLHDGLAEVVHTYKPDEAAVEQTFVNKDAVATLKLGQARGIAMLVPARAGLRVSEYAPNAVKKAVIGVGHGEKHQIHMMLKILMPKVEFKGDDAADALAIAICHAHNRGSNRMREALAG.

Active-site residues include Asp-11, Glu-71, and Asp-143. Positions 11, 71, and 143 each coordinate Mg(2+).

It belongs to the RuvC family. As to quaternary structure, homodimer which binds Holliday junction (HJ) DNA. The HJ becomes 2-fold symmetrical on binding to RuvC with unstacked arms; it has a different conformation from HJ DNA in complex with RuvA. In the full resolvosome a probable DNA-RuvA(4)-RuvB(12)-RuvC(2) complex forms which resolves the HJ. It depends on Mg(2+) as a cofactor.

Its subcellular location is the cytoplasm. The catalysed reaction is Endonucleolytic cleavage at a junction such as a reciprocal single-stranded crossover between two homologous DNA duplexes (Holliday junction).. In terms of biological role, the RuvA-RuvB-RuvC complex processes Holliday junction (HJ) DNA during genetic recombination and DNA repair. Endonuclease that resolves HJ intermediates. Cleaves cruciform DNA by making single-stranded nicks across the HJ at symmetrical positions within the homologous arms, yielding a 5'-phosphate and a 3'-hydroxyl group; requires a central core of homology in the junction. The consensus cleavage sequence is 5'-(A/T)TT(C/G)-3'. Cleavage occurs on the 3'-side of the TT dinucleotide at the point of strand exchange. HJ branch migration catalyzed by RuvA-RuvB allows RuvC to scan DNA until it finds its consensus sequence, where it cleaves and resolves the cruciform DNA. The sequence is that of Crossover junction endodeoxyribonuclease RuvC from Rhizobium leguminosarum bv. trifolii (strain WSM2304).